We begin with the raw amino-acid sequence, 334 residues long: Ketol-acid reductoisomerase (NADP(+)) (334 aa).

One can recognise a KARI N-terminal Rossmann domain in the interval 1–181; the sequence is MNIYYDKNAD…GGGRTGILET (181 aa). NADP(+) contacts are provided by residues 24 to 27, arginine 47, serine 50, serine 52, and 82 to 85; these read YGSQ and DEFQ. Histidine 107 is an active-site residue. NADP(+) is bound at residue glycine 133. The KARI C-terminal knotted domain maps to 182–323; the sequence is SFKDETETDL…ESLRSMMPWI (142 aa). Aspartate 190, glutamate 194, glutamate 226, and glutamate 230 together coordinate Mg(2+). Serine 251 lines the substrate pocket.

This sequence belongs to the ketol-acid reductoisomerase family. Mg(2+) is required as a cofactor.

It catalyses the reaction (2R)-2,3-dihydroxy-3-methylbutanoate + NADP(+) = (2S)-2-acetolactate + NADPH + H(+). It carries out the reaction (2R,3R)-2,3-dihydroxy-3-methylpentanoate + NADP(+) = (S)-2-ethyl-2-hydroxy-3-oxobutanoate + NADPH + H(+). It functions in the pathway amino-acid biosynthesis; L-isoleucine biosynthesis; L-isoleucine from 2-oxobutanoate: step 2/4. The protein operates within amino-acid biosynthesis; L-valine biosynthesis; L-valine from pyruvate: step 2/4. Involved in the biosynthesis of branched-chain amino acids (BCAA). Catalyzes an alkyl-migration followed by a ketol-acid reduction of (S)-2-acetolactate (S2AL) to yield (R)-2,3-dihydroxy-isovalerate. In the isomerase reaction, S2AL is rearranged via a Mg-dependent methyl migration to produce 3-hydroxy-3-methyl-2-ketobutyrate (HMKB). In the reductase reaction, this 2-ketoacid undergoes a metal-dependent reduction by NADPH to yield (R)-2,3-dihydroxy-isovalerate. This Vesicomyosocius okutanii subsp. Calyptogena okutanii (strain HA) protein is Ketol-acid reductoisomerase (NADP(+)).